The sequence spans 371 residues: Queuine tRNA-ribosyltransferase (371 aa).

Residue aspartate 90 is the Proton acceptor of the active site. Substrate contacts are provided by residues 90–94 (DSGGF), aspartate 144, glutamine 188, and glycine 215. Positions 246–252 (GVGTPED) are RNA binding. The Nucleophile role is filled by aspartate 265. The tract at residues 270-274 (TRNAR) is RNA binding; important for wobble base 34 recognition. Zn(2+)-binding residues include cysteine 303, cysteine 305, cysteine 308, and histidine 334.

It belongs to the queuine tRNA-ribosyltransferase family. In terms of assembly, homodimer. Within each dimer, one monomer is responsible for RNA recognition and catalysis, while the other monomer binds to the replacement base PreQ1. Zn(2+) serves as cofactor.

It carries out the reaction 7-aminomethyl-7-carbaguanine + guanosine(34) in tRNA = 7-aminomethyl-7-carbaguanosine(34) in tRNA + guanine. It functions in the pathway tRNA modification; tRNA-queuosine biosynthesis. Functionally, catalyzes the base-exchange of a guanine (G) residue with the queuine precursor 7-aminomethyl-7-deazaguanine (PreQ1) at position 34 (anticodon wobble position) in tRNAs with GU(N) anticodons (tRNA-Asp, -Asn, -His and -Tyr). Catalysis occurs through a double-displacement mechanism. The nucleophile active site attacks the C1' of nucleotide 34 to detach the guanine base from the RNA, forming a covalent enzyme-RNA intermediate. The proton acceptor active site deprotonates the incoming PreQ1, allowing a nucleophilic attack on the C1' of the ribose to form the product. After dissociation, two additional enzymatic reactions on the tRNA convert PreQ1 to queuine (Q), resulting in the hypermodified nucleoside queuosine (7-(((4,5-cis-dihydroxy-2-cyclopenten-1-yl)amino)methyl)-7-deazaguanosine). The protein is Queuine tRNA-ribosyltransferase of Neisseria gonorrhoeae (strain NCCP11945).